A 160-amino-acid polypeptide reads, in one-letter code: Nucleotide-binding protein CPS_1098 (160 aa).

It belongs to the YajQ family.

In terms of biological role, nucleotide-binding protein. The sequence is that of Nucleotide-binding protein CPS_1098 from Colwellia psychrerythraea (strain 34H / ATCC BAA-681) (Vibrio psychroerythus).